The sequence spans 127 residues: Phosphoribosyl-AMP cyclohydrolase (127 aa).

Residue Asp-75 participates in Mg(2+) binding. Cys-76 lines the Zn(2+) pocket. Positions 77 and 79 each coordinate Mg(2+). Positions 93 and 100 each coordinate Zn(2+).

Belongs to the PRA-CH family. In terms of assembly, homodimer. Requires Mg(2+) as cofactor. The cofactor is Zn(2+).

It localises to the cytoplasm. The catalysed reaction is 1-(5-phospho-beta-D-ribosyl)-5'-AMP + H2O = 1-(5-phospho-beta-D-ribosyl)-5-[(5-phospho-beta-D-ribosylamino)methylideneamino]imidazole-4-carboxamide. Its pathway is amino-acid biosynthesis; L-histidine biosynthesis; L-histidine from 5-phospho-alpha-D-ribose 1-diphosphate: step 3/9. In terms of biological role, catalyzes the hydrolysis of the adenine ring of phosphoribosyl-AMP. In Desulfotalea psychrophila (strain LSv54 / DSM 12343), this protein is Phosphoribosyl-AMP cyclohydrolase.